Reading from the N-terminus, the 403-residue chain is Tyrosine--tRNA ligase (403 aa).

The 'HIGH' region signature appears at 42–51; it reads PTAPDLHLGH. Residues 226–230 carry the 'KMSKS' region motif; the sequence is KMSKS. ATP is bound at residue lysine 229. The S4 RNA-binding domain maps to 336 to 396; sequence MPISAVLNKA…GKKAFGRITL (61 aa).

It belongs to the class-I aminoacyl-tRNA synthetase family. TyrS type 2 subfamily. As to quaternary structure, homodimer.

It localises to the cytoplasm. The catalysed reaction is tRNA(Tyr) + L-tyrosine + ATP = L-tyrosyl-tRNA(Tyr) + AMP + diphosphate + H(+). Its function is as follows. Catalyzes the attachment of tyrosine to tRNA(Tyr) in a two-step reaction: tyrosine is first activated by ATP to form Tyr-AMP and then transferred to the acceptor end of tRNA(Tyr). The chain is Tyrosine--tRNA ligase from Pseudomonas syringae pv. tomato (strain ATCC BAA-871 / DC3000).